The following is a 660-amino-acid chain: Secretin PulD (660 aa).

A signal peptide spans 1–27 (MIIANVIRSFSLTLLIFAALLFRPAAA). Residues 28–124 (EEFSASFKGT…VASDAAPGIG (97 aa)) are N0. The interval 126 to 190 (EVVTRVVPLT…TIVERVDNAG (65 aa)) is N1. An N2 region spans residues 191–264 (DRSVVTVPLS…MIKQLDRQQA (74 aa)). Positions 267-341 (GNTKVIYLKY…DLERVIAQLD (75 aa)) are N3. Residues 346 to 596 (QVLVEAIIAE…LFIRPTVIRD (251 aa)) form a secretin region. Residues 598 to 660 (DEYRQASSGQ…IDAFNLGGNL (63 aa)) form a s domain region.

The protein belongs to the bacterial secretin family. GSP D subfamily. As to quaternary structure, forms a cylindrical channel with 15 subunits.

It localises to the cell outer membrane. Involved in a type II secretion system (T2SS, formerly general secretion pathway, GSP) for the export of proteins. Required for the translocation of pullulanase. This subunit forms the outer membrane channel. The protein is Secretin PulD (pulD) of Klebsiella pneumoniae.